The primary structure comprises 122 residues: UPF0102 protein Ping_1176 (122 aa).

Belongs to the UPF0102 family.

This chain is UPF0102 protein Ping_1176, found in Psychromonas ingrahamii (strain DSM 17664 / CCUG 51855 / 37).